The sequence spans 58 residues: Cholecystokinins (58 aa).

Residue Y52 is modified to Sulfotyrosine. F58 bears the Phenylalanine amide mark.

Belongs to the gastrin/cholecystokinin family. In terms of assembly, binds to CCK-A receptors in the pancreas and CCK-B receptors in the brain. cholecystokinin 8 binds CCK-A receptors more potently than cholecystokinin 58, cholecystokinin 8 and cholecystokinin 58 bind CCK-B receptors with equal affinity. In terms of processing, the precursor is cleaved by proteases to produce a number of active cholecystokinins. Cholecystokinin 58 occurs in both sulfated (CCK58(s)) and nonsulfated (CCK58(ns)) forms, which differ in their receptor-binding activities. CCK58(s) binds to the CCK-A receptor with high affinity, CCK58(ns) binds poorly to the CCK-A receptor. CCK58(s) and CCK58(ns) both bind the CCK-B receptor. Post-translationally, the precursor is cleaved by ACE, which removes the Gly-Arg-Arg peptide at the C-terminus, leading to mature hormone.

The protein resides in the secreted. In terms of biological role, this peptide hormone induces gall bladder contraction and the release of pancreatic enzymes in the gut. Its function in the brain is not clear. Binding to CCK-A receptors stimulates amylase release from the pancreas, binding to CCK-B receptors stimulates gastric acid secretion. cholecystokinin 58 and cholecystokinin 8, but not cholecystokinin 58 desnonopeptide, stimulate amylase release from the pancreas. cholecystokinin 58, but not cholecystokinin 8, increases bile-pancreatic volume. This is Cholecystokinins from Canis lupus familiaris (Dog).